Consider the following 315-residue polypeptide: tRNA pseudouridine synthase B (315 aa).

Asp54 acts as the Nucleophile in catalysis.

Belongs to the pseudouridine synthase TruB family. Type 1 subfamily.

The catalysed reaction is uridine(55) in tRNA = pseudouridine(55) in tRNA. Functionally, responsible for synthesis of pseudouridine from uracil-55 in the psi GC loop of transfer RNAs. The chain is tRNA pseudouridine synthase B from Cupriavidus taiwanensis (strain DSM 17343 / BCRC 17206 / CCUG 44338 / CIP 107171 / LMG 19424 / R1) (Ralstonia taiwanensis (strain LMG 19424)).